The following is a 200-amino-acid chain: dITP/XTP pyrophosphatase (200 aa).

Substrate is bound at residue 19–24; the sequence is TSNAGK. Residues Glu-49 and Asp-78 each coordinate Mg(2+). Asp-78 (proton acceptor) is an active-site residue. Substrate-binding positions include Ser-79, 158-161, Lys-181, and 186-187; these read FGYD and HR.

This sequence belongs to the HAM1 NTPase family. As to quaternary structure, homodimer. Requires Mg(2+) as cofactor.

The catalysed reaction is XTP + H2O = XMP + diphosphate + H(+). It catalyses the reaction dITP + H2O = dIMP + diphosphate + H(+). The enzyme catalyses ITP + H2O = IMP + diphosphate + H(+). In terms of biological role, pyrophosphatase that catalyzes the hydrolysis of nucleoside triphosphates to their monophosphate derivatives, with a high preference for the non-canonical purine nucleotides XTP (xanthosine triphosphate), dITP (deoxyinosine triphosphate) and ITP. Seems to function as a house-cleaning enzyme that removes non-canonical purine nucleotides from the nucleotide pool, thus preventing their incorporation into DNA/RNA and avoiding chromosomal lesions. In Deinococcus radiodurans (strain ATCC 13939 / DSM 20539 / JCM 16871 / CCUG 27074 / LMG 4051 / NBRC 15346 / NCIMB 9279 / VKM B-1422 / R1), this protein is dITP/XTP pyrophosphatase.